The primary structure comprises 67 residues: Large ribosomal subunit protein bL31 (67 aa).

Residues C16, C18, C36, and C39 each contribute to the Zn(2+) site.

It belongs to the bacterial ribosomal protein bL31 family. Type A subfamily. Part of the 50S ribosomal subunit. Requires Zn(2+) as cofactor.

Binds the 23S rRNA. This Syntrophomonas wolfei subsp. wolfei (strain DSM 2245B / Goettingen) protein is Large ribosomal subunit protein bL31.